The following is a 90-amino-acid chain: Small ribosomal subunit protein bS16 (90 aa).

The protein belongs to the bacterial ribosomal protein bS16 family.

The sequence is that of Small ribosomal subunit protein bS16 from Geobacillus thermodenitrificans (strain NG80-2).